We begin with the raw amino-acid sequence, 44 residues long: Photosystem I reaction center subunit IX (44 aa).

The chain crosses the membrane as a helical span at residues 9–29 (FVRSAPVVAAIWLSLTAGIII).

This sequence belongs to the PsaJ family.

It localises to the cellular thylakoid membrane. May help in the organization of the PsaE and PsaF subunits. The chain is Photosystem I reaction center subunit IX from Prochlorococcus marinus (strain MIT 9301).